The primary structure comprises 249 residues: Probable phosphatase Spea_1436 (249 aa).

The Zn(2+) site is built by histidine 8, histidine 10, histidine 16, histidine 41, glutamate 74, histidine 102, histidine 132, aspartate 193, and histidine 195.

It belongs to the PHP family. Requires Zn(2+) as cofactor.

The sequence is that of Probable phosphatase Spea_1436 from Shewanella pealeana (strain ATCC 700345 / ANG-SQ1).